Consider the following 276-residue polypeptide: Omega-amidase NIT2-B (276 aa).

The region spanning 4 to 248 is the CN hydrolase domain; sequence FRLSLVQFLV…ETVISADIDL (245 aa). Glutamate 43 (proton acceptor) is an active-site residue. The Proton donor role is filled by lysine 112. Cysteine 153 (nucleophile) is an active-site residue.

This sequence belongs to the carbon-nitrogen hydrolase superfamily. NIT1/NIT2 family. Homodimer.

Its subcellular location is the cytoplasm. The enzyme catalyses 2-oxoglutaramate + H2O = 2-oxoglutarate + NH4(+). The catalysed reaction is 2-oxosuccinamate + H2O = oxaloacetate + NH4(+). In terms of biological role, has omega-amidase activity. The role of omega-amidase is to remove potentially toxic intermediates by converting 2-oxoglutaramate and 2-oxosuccinamate to biologically useful 2-oxoglutarate and oxaloacetate, respectively. The chain is Omega-amidase NIT2-B (nit2b) from Xenopus laevis (African clawed frog).